A 212-amino-acid polypeptide reads, in one-letter code: Adenylate kinase (212 aa).

10–15 (GAGKGT) provides a ligand contact to ATP. Positions 30–59 (STGDMFRAAMANQTEMGRLAKSYIDKGELV) are NMP. AMP contacts are provided by residues Thr31, Arg36, 57 to 59 (ELV), 86 to 89 (GYPR), and Gln93. The LID stretch occupies residues 127-159 (GRIINRKTGETFHKVFNPPVDYKEEDYYQREDD). ATP-binding positions include Arg128 and 137–138 (TF). Residues Arg156 and Arg167 each coordinate AMP. Residue Gln195 participates in ATP binding.

Belongs to the adenylate kinase family. As to quaternary structure, monomer.

The protein localises to the cytoplasm. The catalysed reaction is AMP + ATP = 2 ADP. Its pathway is purine metabolism; AMP biosynthesis via salvage pathway; AMP from ADP: step 1/1. Catalyzes the reversible transfer of the terminal phosphate group between ATP and AMP. Plays an important role in cellular energy homeostasis and in adenine nucleotide metabolism. This is Adenylate kinase from Streptococcus pyogenes serotype M3 (strain ATCC BAA-595 / MGAS315).